Here is a 752-residue protein sequence, read N- to C-terminus: MAISSKEQETKKVKISVDKNPVDTSFEKWAQPGHFSRTLAKGPKTTTWIWNLHADAHDFDSQTSSLEEVSRKIFSAHFGQLAVIFLWLSGMYFHGARFSNYVAWLSNPTGIKPSAQVVWPIVGQEILNGDVGGGFQGVQVTSGWFQLWRASGITTEFQLYCTAIGGLGMAALMLFAGWFHYHKAAPKLEWFQNVESMMNHHLAGLLGLGCLGWAGHQIHLSLPINKLLDSGVSPQEIPLPHEFLINRELMAQLYPSFSKGLVPFFTLNWAEYSDFLTFKGGLNPVTGGLWLSDTAHHHLALAVLFLAAGHMYRTNWGIGHSMKEILEAHKGPFTGNGHEGLYEILTTSWHAQLAINLAMMGSLSIIVAHHMYAMPPYPYIATDYPTQLSLFTHHMWIGGFCVVGAGAHASIFMVRDYNPAENYNNLLDRIIRHRDAIVSHLNWVCIFLGFHSFGLYIHNDTMRALGRSQDMFSDTAIQLQPIFAQWVQSIHTLAPGNTAPNALATASYAFGGEVVSVGNKVAMMPISLGTADFMVHHIHAFTIHVTVLILVKGFLFSRNSRLIPDKANLGFRFPCDGPGRGGTCQVSGWDHVFLGLFWMYNSLSVAIFHFSWKMQSDVWGSVSPSGNVSHITGGNFAQSAITINGWLRDFLWAQASQVIQSYGSALSAYGLIFLAAHFVWAFSLMFLFSGRGYWQELIESIVWAHNKIKVAPAIQPRALSITQGRAVGVAHYLLGGIGTTWAFFLARIISVG.

A run of 8 helical transmembrane segments spans residues 73-96 (IFSA…FHGA), 159-182 (LYCT…FHYH), 198-222 (MNHH…HLSL), 294-312 (TAHH…GHMY), 349-372 (WHAQ…HHMY), 388-414 (LSLF…IFMV), 436-458 (AIVS…LYIH), and 533-551 (FMVH…LILV). The [4Fe-4S] cluster site is built by Cys-575 and Cys-584. 2 helical membrane-spanning segments follow: residues 591 to 612 (HVFL…HFSW) and 666 to 688 (LSAY…MFLF). A chlorophyll a'-binding site is contributed by His-677. Met-685 and Tyr-693 together coordinate chlorophyll a. Phylloquinone is bound at residue Trp-694. A helical membrane pass occupies residues 726–746 (AVGVAHYLLGGIGTTWAFFLA).

It belongs to the PsaA/PsaB family. As to quaternary structure, the PsaA/B heterodimer binds the P700 chlorophyll special pair and subsequent electron acceptors. PSI consists of a core antenna complex that captures photons, and an electron transfer chain that converts photonic excitation into a charge separation. The eukaryotic PSI reaction center is composed of at least 11 subunits. Requires P700 is a chlorophyll a/chlorophyll a' dimer, A0 is one or more chlorophyll a, A1 is one or both phylloquinones and FX is a shared 4Fe-4S iron-sulfur center. as cofactor.

The protein localises to the plastid. Its subcellular location is the chloroplast thylakoid membrane. It catalyses the reaction reduced [plastocyanin] + hnu + oxidized [2Fe-2S]-[ferredoxin] = oxidized [plastocyanin] + reduced [2Fe-2S]-[ferredoxin]. Functionally, psaA and PsaB bind P700, the primary electron donor of photosystem I (PSI), as well as the electron acceptors A0, A1 and FX. PSI is a plastocyanin/cytochrome c6-ferredoxin oxidoreductase, converting photonic excitation into a charge separation, which transfers an electron from the donor P700 chlorophyll pair to the spectroscopically characterized acceptors A0, A1, FX, FA and FB in turn. Oxidized P700 is reduced on the lumenal side of the thylakoid membrane by plastocyanin or cytochrome c6. This is Photosystem I P700 chlorophyll a apoprotein A1 from Porphyra purpurea (Red seaweed).